The primary structure comprises 982 residues: Protein cramped (982 aa).

Disordered regions lie at residues 1–37, 71–111, 323–349, 407–456, and 822–851; these read MEEL…GGGA, QKMK…GSGK, SLPS…ASLD, NKRL…SSGD, and GTSS…QEPG. A compositionally biased stretch (pro residues) spans 7-20; it reads QPPPPPLTQPPPPS. Positions 21-30 are enriched in low complexity; the sequence is SSVSIEEPLP. A compositionally biased stretch (basic and acidic residues) spans 86–98; the sequence is SEREPNKKEEKAA. Over residues 100-111 the composition is skewed to polar residues; the sequence is KTPSQLKTGSGK. An SANT domain is found at 109–173; it reads SGKTTWTNVE…HYYQTHHKIC (65 aa). A compositionally biased stretch (basic and acidic residues) spans 410-425; the sequence is LRTESGSEKRSPETKK. Phosphoserine is present on residues Ser431 and Ser437. Over residues 822–833 the composition is skewed to low complexity; it reads GTSSAGISTSGS.

The protein belongs to the cramped family. In terms of tissue distribution, ubiquitously expressed throughout embryonic development. High expression is detected in CNS and gonads.

It is found in the nucleus. Its function is as follows. Polycomb group (Pc-G) genes are needed to maintain expression patterns of the homeotic selector genes of the Antennapedia (Antp-C) and Bithorax (Bx-C) complexes, and hence for the maintenance of segmental determination. Can act as a modifier of position effect variegation (PEV). This is Protein cramped (crm) from Drosophila melanogaster (Fruit fly).